The primary structure comprises 210 residues: MSIVVKKWKELAEVKAELAARDWFFATSGNLSIKVTDDPLTFLVTASGKDKRKQTDEDFLLVDAAGKPAEETNLKPSAETLLHAEIYGRTNAGCVLHVHTVDNNLISELYAQNGEAVFSGQEIIKAFGIWEENAAVRIPIIDNYADIPTLAREFANYIHGDAGAVLIQNHGITVWGRTAFEAKKHLEAWEFLFRWQVKRLLLQRAGLPVG.

2 residues coordinate Zn(2+): H97 and H99.

It belongs to the aldolase class II family. MtnB subfamily. As to quaternary structure, homotetramer. Requires Zn(2+) as cofactor.

It catalyses the reaction 5-(methylsulfanyl)-D-ribulose 1-phosphate = 5-methylsulfanyl-2,3-dioxopentyl phosphate + H2O. The protein operates within amino-acid biosynthesis; L-methionine biosynthesis via salvage pathway; L-methionine from S-methyl-5-thio-alpha-D-ribose 1-phosphate: step 2/6. In terms of biological role, catalyzes the dehydration of methylthioribulose-1-phosphate (MTRu-1-P) into 2,3-diketo-5-methylthiopentyl-1-phosphate (DK-MTP-1-P). In Geobacillus kaustophilus (strain HTA426), this protein is Methylthioribulose-1-phosphate dehydratase.